Reading from the N-terminus, the 109-residue chain is Parvalbumin alpha (109 aa).

EF-hand domains lie at 38–73 (KTDA…FSAH) and 77–109 (LNDT…VAQA). Aspartate 51, aspartate 53, serine 55, glutamate 62, aspartate 90, aspartate 92, aspartate 94, lysine 96, and glutamate 101 together coordinate Ca(2+).

The protein belongs to the parvalbumin family.

In muscle, parvalbumin is thought to be involved in relaxation after contraction. It binds two calcium ions. This is Parvalbumin alpha from Triakis semifasciata (Leopard shark).